The following is a 396-amino-acid chain: Elongation factor Tu (396 aa).

In terms of domain architecture, tr-type G spans 10–206; sequence KPHVNVGTIG…ALDASIPEPK (197 aa). Residues 19–26 form a G1 region; that stretch reads GHVDHGKT. Position 19–26 (19–26) interacts with GTP; it reads GHVDHGKT. Position 26 (Thr26) interacts with Mg(2+). The segment at 60–64 is G2; that stretch reads GITIS. The tract at residues 81–84 is G3; the sequence is DCPG. GTP contacts are provided by residues 81–85 and 136–139; these read DCPGH and NKAD. The segment at 136 to 139 is G4; the sequence is NKAD. A G5 region spans residues 174–176; sequence SAL.

It belongs to the TRAFAC class translation factor GTPase superfamily. Classic translation factor GTPase family. EF-Tu/EF-1A subfamily. As to quaternary structure, monomer.

Its subcellular location is the cytoplasm. It carries out the reaction GTP + H2O = GDP + phosphate + H(+). Its function is as follows. GTP hydrolase that promotes the GTP-dependent binding of aminoacyl-tRNA to the A-site of ribosomes during protein biosynthesis. In Dichelobacter nodosus (strain VCS1703A), this protein is Elongation factor Tu.